Consider the following 417-residue polypeptide: NADH-quinone oxidoreductase subunit D (417 aa).

Belongs to the complex I 49 kDa subunit family. In terms of assembly, NDH-1 is composed of 14 different subunits. Subunits NuoB, C, D, E, F, and G constitute the peripheral sector of the complex.

Its subcellular location is the cell inner membrane. The catalysed reaction is a quinone + NADH + 5 H(+)(in) = a quinol + NAD(+) + 4 H(+)(out). Its function is as follows. NDH-1 shuttles electrons from NADH, via FMN and iron-sulfur (Fe-S) centers, to quinones in the respiratory chain. The immediate electron acceptor for the enzyme in this species is believed to be ubiquinone. Couples the redox reaction to proton translocation (for every two electrons transferred, four hydrogen ions are translocated across the cytoplasmic membrane), and thus conserves the redox energy in a proton gradient. The sequence is that of NADH-quinone oxidoreductase subunit D from Francisella philomiragia subsp. philomiragia (strain ATCC 25017 / CCUG 19701 / FSC 153 / O#319-036).